Here is a 518-residue protein sequence, read N- to C-terminus: Major facilitator superfamily domain-containing protein 8 (518 aa).

A disordered region spans residues 1-20; sequence MAGLRNESEQEPLLGDTPGS. At 1-40 the chain is on the cytoplasmic side; the sequence is MAGLRNESEQEPLLGDTPGSREWDILETEEHYKSRWRSIR. The Dileucine internalization motif motif lies at 13–14; the sequence is LL. Residues 41–61 form a helical membrane-spanning segment; that stretch reads ILYLTMFLSSVGFSVVMMSIW. Topologically, residues 62-74 are extracellular; that stretch reads PYLQKIDPTADTS. A helical transmembrane segment spans residues 75–95; sequence FLGWVIASYSLGQMVASPIFG. At 96 to 105 the chain is on the cytoplasmic side; that stretch reads LWSNYRPRKE. The chain crosses the membrane as a helical span at residues 106–126; it reads PLIVSILISVAANCLYAYLHI. Residues 127–131 lie on the Extracellular side of the membrane; that stretch reads PASHN. A helical transmembrane segment spans residues 132–152; it reads KYYMLVARGLLGIGAGNVAVV. Topologically, residues 153–173 are cytoplasmic; the sequence is RSYTAGATSLQERTSSMANIS. The helical transmembrane segment at 174-194 threads the bilayer; that stretch reads MCQALGFILGPVFQTCFTFLG. Topologically, residues 195-211 are extracellular; that stretch reads EKGVTWDVIKLQINMYT. Residues 212–232 form a helical membrane-spanning segment; sequence TPVLLSAFLGILNIILILAIL. Topologically, residues 233 to 266 are cytoplasmic; the sequence is REHRVDDSGRQCKSINFEEASTDEAQVPQGNIDQ. The chain crosses the membrane as a helical span at residues 267 to 287; the sequence is VAVVAINVLFFVTLFIFALFE. The Extracellular segment spans residues 288–304; sequence TIITPLTMDMYAWTQEQ. A helical transmembrane segment spans residues 305–325; that stretch reads AVLYNGIILAALGVEAVVIFL. Residues 326 to 337 are Cytoplasmic-facing; sequence GVKLLSKKIGER. Residues 338 to 358 traverse the membrane as a helical segment; the sequence is AILLGGLIVVWVGFFILLPWG. At 359–412 the chain is on the extracellular side; the sequence is NQFPKIQWEDLHNNSIPNTTFGEIIIGLWKSPMEDDNERPTGCSIEQAWCLYTP. 2 N-linked (GlcNAc...) asparagine glycosylation sites follow: N371 and N376. A helical membrane pass occupies residues 413–433; sequence VIHLAQFLTSAVLIGLGYPVC. Topologically, residues 434 to 451 are cytoplasmic; it reads NLMSYTLYSKILGPKPQG. A helical membrane pass occupies residues 452-472; the sequence is VYMGWLTASGSGARILGPMFI. Over 473–482 the chain is Extracellular; that stretch reads SQVYAHWGPR. A helical transmembrane segment spans residues 483-503; sequence WAFSLVCGIIVLTITLLGVVY. Residues 504–518 lie on the Cytoplasmic side of the membrane; the sequence is KRLIALSVRYGRIQE.

Belongs to the major facilitator superfamily. Expressed at very low levels in all tissues tested.

It is found in the endosome membrane. The protein resides in the lysosome membrane. The enzyme catalyses chloride(in) = chloride(out). It carries out the reaction iodide(out) = iodide(in). The catalysed reaction is fluoride(in) = fluoride(out). With respect to regulation, inhibited by chloride channel blockers 4,4'-diisothiocyano-2,2'-stilbenedisulfonate (DIDS), niflumic acid (NFA), and 5-Nitro-2-(3-phenylpropylamino) benzoic acid (NPPB). In terms of biological role, outward-rectifying chloride channel involved in endolysosomal chloride homeostasis, membrane fusion and function. Conducts chloride currents up to hundreds of picoamperes. Regulates lysosomal calcium content by reducing the lysosomal membrane potential, thereby activating TRPML1 channel and further release of lysosomal calcium ions. Regulates the pH in endolysosomal compartments and may contribute to progressive acidification from endosome to lysosome. Permeable to other halides such as iodide and fluoride ions. The polypeptide is Major facilitator superfamily domain-containing protein 8 (Homo sapiens (Human)).